The following is a 237-amino-acid chain: Uridylate kinase (237 aa).

Residue 9–12 coordinates ATP; that stretch reads KLSG. A UMP-binding site is contributed by Gly51. Gly52 and Arg56 together coordinate ATP. UMP is bound by residues Asp71 and 132–139; that span reads CGNPFFTT. Residues Thr159, Tyr165, and Asp168 each contribute to the ATP site.

This sequence belongs to the UMP kinase family. Homohexamer.

The protein localises to the cytoplasm. The enzyme catalyses UMP + ATP = UDP + ADP. The protein operates within pyrimidine metabolism; CTP biosynthesis via de novo pathway; UDP from UMP (UMPK route): step 1/1. With respect to regulation, inhibited by UTP. In terms of biological role, catalyzes the reversible phosphorylation of UMP to UDP. The sequence is that of Uridylate kinase from Prochlorococcus marinus (strain NATL1A).